The following is a 431-amino-acid chain: Na(+)/H(+) antiporter NhaA (431 aa).

11 helical membrane-spanning segments follow: residues 33–53, 74–94, 112–132, 144–164, 173–193, 197–217, 225–245, 279–299, 311–331, 347–367, and 379–399; these read VGGA…NSPW, LSIS…VVGV, ALPI…FVGV, GWAI…AVIA, IFLL…IAVF, QLSF…GLAV, FLLL…GVHA, FAVP…LSGF, VIAG…YVLA, VLGL…IGEL, and AKIA…VVLL.

It belongs to the NhaA Na(+)/H(+) (TC 2.A.33) antiporter family.

The protein resides in the cell membrane. The catalysed reaction is Na(+)(in) + 2 H(+)(out) = Na(+)(out) + 2 H(+)(in). Its function is as follows. Na(+)/H(+) antiporter that extrudes sodium in exchange for external protons. The protein is Na(+)/H(+) antiporter NhaA of Mycolicibacterium smegmatis (strain ATCC 700084 / mc(2)155) (Mycobacterium smegmatis).